The chain runs to 92 residues: Small ribosomal subunit protein uS19c (92 aa).

This sequence belongs to the universal ribosomal protein uS19 family.

The protein localises to the plastid. It is found in the chloroplast. In terms of biological role, protein S19 forms a complex with S13 that binds strongly to the 16S ribosomal RNA. The protein is Small ribosomal subunit protein uS19c of Phaeodactylum tricornutum (strain CCAP 1055/1).